Consider the following 169-residue polypeptide: NADH-quinone oxidoreductase subunit B (169 aa).

[4Fe-4S] cluster is bound by residues Cys-42, Cys-43, Cys-107, and Cys-136.

This sequence belongs to the complex I 20 kDa subunit family. As to quaternary structure, NDH-1 is composed of 14 different subunits. Subunits NuoB, C, D, E, F, and G constitute the peripheral sector of the complex. [4Fe-4S] cluster is required as a cofactor.

The protein resides in the cell inner membrane. The enzyme catalyses a quinone + NADH + 5 H(+)(in) = a quinol + NAD(+) + 4 H(+)(out). Its function is as follows. NDH-1 shuttles electrons from NADH, via FMN and iron-sulfur (Fe-S) centers, to quinones in the respiratory chain. The immediate electron acceptor for the enzyme in this species is believed to be ubiquinone. Couples the redox reaction to proton translocation (for every two electrons transferred, four hydrogen ions are translocated across the cytoplasmic membrane), and thus conserves the redox energy in a proton gradient. In Sulfurimonas denitrificans (strain ATCC 33889 / DSM 1251) (Thiomicrospira denitrificans (strain ATCC 33889 / DSM 1251)), this protein is NADH-quinone oxidoreductase subunit B.